A 353-amino-acid polypeptide reads, in one-letter code: Photosystem II D2 protein (353 aa).

Position 2 is an N-acetylthreonine (Thr-2). A Phosphothreonine modification is found at Thr-2. A helical membrane pass occupies residues 41-61 (CAYFALGGWFTGTTFVTSWYT). Position 118 (His-118) interacts with chlorophyll a. A helical transmembrane segment spans residues 125-141 (GFMLRQFELARSVQLRP). Gln-130 and Asn-143 together coordinate pheophytin a. A helical transmembrane segment spans residues 153–166 (VFVSVFLIYPLGQS). His-198 contacts chlorophyll a. Residues 208 to 228 (AALLCAIHGATVENTLFEDGD) traverse the membrane as a helical segment. His-215 and Phe-262 together coordinate a plastoquinone. His-215 contacts Fe cation. Residue His-269 participates in Fe cation binding. The helical transmembrane segment at 279–295 (GLWMSALGVVGLALNLR) threads the bilayer.

Belongs to the reaction center PufL/M/PsbA/D family. PSII is composed of 1 copy each of membrane proteins PsbA, PsbB, PsbC, PsbD, PsbE, PsbF, PsbH, PsbI, PsbJ, PsbK, PsbL, PsbM, PsbT, PsbX, PsbY, PsbZ, Psb30/Ycf12, at least 3 peripheral proteins of the oxygen-evolving complex and a large number of cofactors. It forms dimeric complexes. Interacts with PAM68. The cofactor is The D1/D2 heterodimer binds P680, chlorophylls that are the primary electron donor of PSII, and subsequent electron acceptors. It shares a non-heme iron and each subunit binds pheophytin, quinone, additional chlorophylls, carotenoids and lipids. There is also a Cl(-1) ion associated with D1 and D2, which is required for oxygen evolution. The PSII complex binds additional chlorophylls, carotenoids and specific lipids.. In terms of processing, phosphorylation occurs in normal plant growth light conditions. Rapid dephosphorylation occurs during heat shock.

The protein localises to the plastid. It is found in the chloroplast thylakoid membrane. The enzyme catalyses 2 a plastoquinone + 4 hnu + 2 H2O = 2 a plastoquinol + O2. Its function is as follows. Photosystem II (PSII) is a light-driven water:plastoquinone oxidoreductase that uses light energy to abstract electrons from H(2)O, generating O(2) and a proton gradient subsequently used for ATP formation. It consists of a core antenna complex that captures photons, and an electron transfer chain that converts photonic excitation into a charge separation. The D1/D2 (PsbA/PsbD) reaction center heterodimer binds P680, the primary electron donor of PSII as well as several subsequent electron acceptors. D2 is needed for assembly of a stable PSII complex. This Arabidopsis thaliana (Mouse-ear cress) protein is Photosystem II D2 protein.